The primary structure comprises 309 residues: MADLKAILDSIYTDILPRVGEGKVADYIPELAKVDPRQFGMAIVTVDGKVYRVGDADIAFSIQSISKVFMLTLALGKVGEGLWKRVGREPSGSAFNSIVQLEHESGIPRNPFINAGAIAVTDVVMAGHAPREAIGELLRFVRYLADDESITIDDKVARSETQTGYRNVALANFMRAYRNLDHPVDHVLGVYFHQCALSMSCEQLARAGLFLAARGSNPMTGHSVVSPKRARRINALMLTCGHYDGSGDFAYHVGLPGKSGVGGGIFAVAPGIASIAVWSPGLNKVGNSQLGAVALEMLAARTGWSVFGD.

Substrate contacts are provided by Ser64, Asn114, Glu160, Asn167, Tyr191, Tyr243, and Val261.

This sequence belongs to the glutaminase family. Homotetramer.

It catalyses the reaction L-glutamine + H2O = L-glutamate + NH4(+). The protein is Glutaminase of Rhizobium etli (strain CIAT 652).